Consider the following 86-residue polypeptide: uncharacterized protein (86 aa).

This is an uncharacterized protein from Haemophilus influenzae (strain ATCC 51907 / DSM 11121 / KW20 / Rd).